A 91-amino-acid polypeptide reads, in one-letter code: Acylphosphatase (91 aa).

The 89-residue stretch at 3–91 (HIKVNVKGQV…TELTKFEVKY (89 aa)) folds into the Acylphosphatase-like domain. Active-site residues include Arg18 and Asn36.

Belongs to the acylphosphatase family.

The catalysed reaction is an acyl phosphate + H2O = a carboxylate + phosphate + H(+). The chain is Acylphosphatase (acyP) from Oceanobacillus iheyensis (strain DSM 14371 / CIP 107618 / JCM 11309 / KCTC 3954 / HTE831).